Reading from the N-terminus, the 269-residue chain is 5'-nucleotidase SurE (269 aa).

The a divalent metal cation site is built by Asp8, Asp9, Ser40, and Asn95.

This sequence belongs to the SurE nucleotidase family. A divalent metal cation is required as a cofactor.

The protein localises to the cytoplasm. It catalyses the reaction a ribonucleoside 5'-phosphate + H2O = a ribonucleoside + phosphate. Nucleotidase that shows phosphatase activity on nucleoside 5'-monophosphates. The protein is 5'-nucleotidase SurE of Nitratidesulfovibrio vulgaris (strain DSM 19637 / Miyazaki F) (Desulfovibrio vulgaris).